Consider the following 278-residue polypeptide: 4-deoxy-L-threo-5-hexosulose-uronate ketol-isomerase (278 aa).

4 residues coordinate Zn(2+): histidine 196, histidine 198, glutamate 203, and histidine 245.

This sequence belongs to the KduI family. Zn(2+) serves as cofactor.

It catalyses the reaction 5-dehydro-4-deoxy-D-glucuronate = 3-deoxy-D-glycero-2,5-hexodiulosonate. Its pathway is glycan metabolism; pectin degradation; 2-dehydro-3-deoxy-D-gluconate from pectin: step 4/5. In terms of biological role, catalyzes the isomerization of 5-dehydro-4-deoxy-D-glucuronate to 3-deoxy-D-glycero-2,5-hexodiulosonate. This Shigella sonnei (strain Ss046) protein is 4-deoxy-L-threo-5-hexosulose-uronate ketol-isomerase.